Consider the following 298-residue polypeptide: Inosose dehydratase (298 aa).

Belongs to the IolE/MocC family. Requires glutathione as cofactor. It depends on Co(2+) as a cofactor. The cofactor is Mn(2+).

The catalysed reaction is scyllo-inosose = 3D-3,5/4-trihydroxycyclohexane-1,2-dione + H2O. Its pathway is polyol metabolism; myo-inositol degradation into acetyl-CoA; acetyl-CoA from myo-inositol: step 2/7. Its function is as follows. Catalyzes the dehydration of inosose (2-keto-myo-inositol, 2KMI or 2,4,6/3,5-pentahydroxycyclohexanone) to 3D-(3,5/4)-trihydroxycyclohexane-1,2-dione (D-2,3-diketo-4-deoxy-epi-inositol). In Bacillus anthracis (strain CDC 684 / NRRL 3495), this protein is Inosose dehydratase.